The following is a 620-amino-acid chain: Translocator protein BipB (620 aa).

Residues 58-95 (QCDAQPAAHDARLDDKPALRAPQERDAPPLGASDTGSR) form a disordered region. Basic and acidic residues predominate over residues 66-84 (HDARLDDKPALRAPQERDA). Positions 309–339 (EMQAKREAELQKKSDEYQAQVKKAEEMQKTM) form a coiled coil. 3 consecutive transmembrane segments (helical) span residues 355 to 375 (FAAA…GLAL), 401 to 421 (AILK…LVAC), and 430 to 450 (LAGA…AAFV).

Belongs to the SctE/SipB/YopB family.

The protein localises to the secreted. The protein resides in the host membrane. Functionally, plays a role in the bacterium-induced formation of multinucleated giant cell (MNGC), which is formed after host cell fusion, as well as in the intercellular spreading of bacteria and in the induction of apoptosis in macrophages. May act in concert with other effector proteins to induce fusion of host cell membranes. The sequence is that of Translocator protein BipB (bipB) from Burkholderia pseudomallei (strain 1710b).